We begin with the raw amino-acid sequence, 251 residues long: MSGHSKWATTKHKKAILDSRRAKSFAKLIKNIEVAARMGGPDLAGNPSLELAVTKAKKTSVPADNIDRAIKRGAGLTGEVVDYTEIMYECRGPQGSALLIECLTDNKNRAASEVRLAISRNGGTIADPGSVSYLFSRKGVVTLPKNGLSEDDVLMAVLDAGAEEVKDNGETFEIHSDPKDLQAVRDALKDAGIDYDTDEAEFVPSMEVPLDLDAAKKFMKLVDALEELDDVQNVYSNADLSDEVQAALEAE.

Belongs to the TACO1 family.

Its subcellular location is the cytoplasm. The polypeptide is Probable transcriptional regulatory protein Arth_2304 (Arthrobacter sp. (strain FB24)).